We begin with the raw amino-acid sequence, 181 residues long: NAD(P)H-quinone oxidoreductase subunit 6, chloroplastic (181 aa).

The next 5 membrane-spanning stretches (helical) occupy residues 10 to 30 (TLLFVVLEFAILVGALGVVLL), 33 to 53 (VIYSALLLGFVFICVALLYLL), 62 to 82 (AQVLIYVGAVNVLIVFAIMLV), 98 to 118 (IISAFTFIALFVLLTIMIFTT), and 153 to 173 (LFPFELLSLLLLVALVGAITI).

It belongs to the complex I subunit 6 family. In terms of assembly, NDH is composed of at least 16 different subunits, 5 of which are encoded in the nucleus.

Its subcellular location is the plastid. The protein resides in the chloroplast thylakoid membrane. It catalyses the reaction a plastoquinone + NADH + (n+1) H(+)(in) = a plastoquinol + NAD(+) + n H(+)(out). The catalysed reaction is a plastoquinone + NADPH + (n+1) H(+)(in) = a plastoquinol + NADP(+) + n H(+)(out). Functionally, NDH shuttles electrons from NAD(P)H:plastoquinone, via FMN and iron-sulfur (Fe-S) centers, to quinones in the photosynthetic chain and possibly in a chloroplast respiratory chain. The immediate electron acceptor for the enzyme in this species is believed to be plastoquinone. Couples the redox reaction to proton translocation, and thus conserves the redox energy in a proton gradient. This Zygnema circumcarinatum (Green alga) protein is NAD(P)H-quinone oxidoreductase subunit 6, chloroplastic (ndhG).